The sequence spans 186 residues: Oligoribonuclease (186 aa).

One can recognise an Exonuclease domain in the interval 8 to 171; the sequence is LIWIDLEMTG…DDIRESIAEL (164 aa). Tyr-129 is a catalytic residue.

The protein belongs to the oligoribonuclease family.

The protein resides in the cytoplasm. Its function is as follows. 3'-to-5' exoribonuclease specific for small oligoribonucleotides. The polypeptide is Oligoribonuclease (Mannheimia succiniciproducens (strain KCTC 0769BP / MBEL55E)).